The primary structure comprises 130 residues: Small ribosomal subunit protein uS9 (130 aa).

Residues 98–130 are disordered; sequence LKRAGMLTRDPRMKERKKPGLKGARRSPQFSKR. The span at 111–130 shows a compositional bias: basic residues; it reads KERKKPGLKGARRSPQFSKR.

Belongs to the universal ribosomal protein uS9 family.

In Macrococcus caseolyticus (strain JCSC5402) (Macrococcoides caseolyticum), this protein is Small ribosomal subunit protein uS9.